The sequence spans 478 residues: Probable glycine dehydrogenase (decarboxylating) subunit 2 (478 aa).

Lys264 is modified (N6-(pyridoxal phosphate)lysine).

Belongs to the GcvP family. C-terminal subunit subfamily. In terms of assembly, the glycine cleavage system is composed of four proteins: P, T, L and H. In this organism, the P 'protein' is a heterodimer of two subunits. It depends on pyridoxal 5'-phosphate as a cofactor.

It carries out the reaction N(6)-[(R)-lipoyl]-L-lysyl-[glycine-cleavage complex H protein] + glycine + H(+) = N(6)-[(R)-S(8)-aminomethyldihydrolipoyl]-L-lysyl-[glycine-cleavage complex H protein] + CO2. Functionally, the glycine cleavage system catalyzes the degradation of glycine. The P protein binds the alpha-amino group of glycine through its pyridoxal phosphate cofactor; CO(2) is released and the remaining methylamine moiety is then transferred to the lipoamide cofactor of the H protein. The chain is Probable glycine dehydrogenase (decarboxylating) subunit 2 from Endomicrobium trichonymphae.